A 545-amino-acid chain; its full sequence is Cannabidiolic acid synthase-like 1 (545 aa).

A signal peptide spans 1–28; the sequence is MKCSTFCFWYVCKIIFFFLSFNIQISIA. C37 and C99 are oxidised to a cystine. N45, N65, N89, and N168 each carry an N-linked (GlcNAc...) asparagine glycan. The FAD-binding PCMH-type domain maps to 77–251; sequence TTPKPLVIIT…AAWKIRLVAV (175 aa). Residues 114 to 176 constitute a cross-link (6-(S-cysteinyl)-8alpha-(pros-histidyl)-FAD (His-Cys)); sequence HDAEGMSYIS…ENLSFPAGYC (63 aa). H292 provides a ligand contact to substrate. N-linked (GlcNAc...) asparagine glycosylation is found at N297, N305, N329, and N361. Y417 is a binding site for substrate. N-linked (GlcNAc...) asparagine glycosylation is present at N467. Residue Y484 is the Proton acceptor of the active site. A glycan (N-linked (GlcNAc...) asparagine) is linked at N499.

It belongs to the oxygen-dependent FAD-linked oxidoreductase family. FAD serves as cofactor. Post-translationally, the FAD cofactor is bound via a bicovalent 6-S-cysteinyl, 8alpha-N1-histidyl FAD linkage.

It is found in the secreted. Its function is as follows. Has no cannabidiolic acid synthase activity. This Cannabis sativa (Hemp) protein is Cannabidiolic acid synthase-like 1 (CBDAS2).